Here is a 172-residue protein sequence, read N- to C-terminus: Pollen-specific protein-like At4g18596 (172 aa).

The first 27 residues, 1-27 (MASKAIFFFFVSAVCLSSLAGVAIADA), serve as a signal peptide directing secretion. 3 disulfides stabilise this stretch: Cys-41–Cys-112, Cys-44–Cys-157, and Cys-65–Cys-100. Asn-70 carries an N-linked (GlcNAc...) asparagine glycan.

This sequence belongs to the Ole e I family.

It is found in the secreted. This Arabidopsis thaliana (Mouse-ear cress) protein is Pollen-specific protein-like At4g18596.